The sequence spans 314 residues: tRNA dimethylallyltransferase (314 aa).

Residues 1–24 (MAEEPQRSPAPTSPFAFTVPSNPL) form a disordered region. Residue 40–47 (GPTASGKS) coordinates ATP. 42 to 47 (TASGKS) is a substrate binding site.

The protein belongs to the IPP transferase family. In terms of assembly, monomer. Mg(2+) is required as a cofactor.

The enzyme catalyses adenosine(37) in tRNA + dimethylallyl diphosphate = N(6)-dimethylallyladenosine(37) in tRNA + diphosphate. Functionally, catalyzes the transfer of a dimethylallyl group onto the adenine at position 37 in tRNAs that read codons beginning with uridine, leading to the formation of N6-(dimethylallyl)adenosine (i(6)A). This is tRNA dimethylallyltransferase from Cereibacter sphaeroides (strain ATCC 17029 / ATH 2.4.9) (Rhodobacter sphaeroides).